The following is a 631-amino-acid chain: Phosphomethylpyrimidine synthase (631 aa).

Substrate is bound by residues Asn239, Met268, Tyr297, His333, 353–355 (SRG), 394–397 (DGLR), and Glu433. Position 437 (His437) interacts with Zn(2+). Tyr460 lines the substrate pocket. His501 contributes to the Zn(2+) binding site. Cys581, Cys584, and Cys589 together coordinate [4Fe-4S] cluster.

Belongs to the ThiC family. In terms of assembly, homodimer. [4Fe-4S] cluster serves as cofactor.

The catalysed reaction is 5-amino-1-(5-phospho-beta-D-ribosyl)imidazole + S-adenosyl-L-methionine = 4-amino-2-methyl-5-(phosphooxymethyl)pyrimidine + CO + 5'-deoxyadenosine + formate + L-methionine + 3 H(+). The protein operates within cofactor biosynthesis; thiamine diphosphate biosynthesis. In terms of biological role, catalyzes the synthesis of the hydroxymethylpyrimidine phosphate (HMP-P) moiety of thiamine from aminoimidazole ribotide (AIR) in a radical S-adenosyl-L-methionine (SAM)-dependent reaction. The polypeptide is Phosphomethylpyrimidine synthase (Escherichia coli O8 (strain IAI1)).